Reading from the N-terminus, the 328-residue chain is Fructokinase-2 (328 aa).

This sequence belongs to the carbohydrate kinase PfkB family.

It carries out the reaction D-fructose + ATP = D-fructose 6-phosphate + ADP + H(+). Its pathway is glycan biosynthesis; starch biosynthesis. In terms of biological role, may play an important role in maintaining the flux of carbon towards starch formation. The chain is Fructokinase-2 (FRK2) from Solanum habrochaites (Wild tomato).